We begin with the raw amino-acid sequence, 610 residues long: MNPPFDSASFLKTVTHQPGVYRMYNADAVVIYVGKAKDLQKRLSSYFRKKVDSEKTRALVSNIAKIDVTVTHTETEALILEHNYIKQYLPKYNVLLRDDKSYPYILISGHKHPRLSMHRGAKKRKGEYFGPYPDSGAVRETLHLLQKIFPVRQCEDTVYSNRTRPCLMYQIGRCAGPCVSSIISDEEYAELVGFVRLFLQGKDQQVLKQLIEKMEVASQQLRFEDAAKFRDQIQAIRRVQEQQYVSEDSMDDMDVLGFAQENGIACIHILMIRQGKVLGSRSHFPKIPQNTSQQEVFDSFLTQYYLSHNEARTIPSRIILNQELADDLEPIQKALSEVAGRKVHFHTSPTGARGRYLKLSNTNALTAITTKINHKMTINQRFKALRETLGMESIMRMECFDISHTMGESTIASCVVFNNEGPVKQEYRRYNITGITGGDDYAAMGQALERRYSKQLDVEKIPDIIFIDGGKGQLNRAHEIIAQYWGDWPKRPIMIGIAKGVTRKPGLETLITVDGEEFNLPSDAPALHLIQHIRDESHNHAIAGHRAKRGKTRRTSALEGIEGVGPKRRQALLKYMGGLQELKRASVEEIAKVPGISHSLAEIIFQALKQ.

The region spanning 16-94 (HQPGVYRMYN…IKQYLPKYNV (79 aa)) is the GIY-YIG domain. The UVR domain occupies 204–239 (QQVLKQLIEKMEVASQQLRFEDAAKFRDQIQAIRRV).

The protein belongs to the UvrC family. Interacts with UvrB in an incision complex.

The protein resides in the cytoplasm. Its function is as follows. The UvrABC repair system catalyzes the recognition and processing of DNA lesions. UvrC both incises the 5' and 3' sides of the lesion. The N-terminal half is responsible for the 3' incision and the C-terminal half is responsible for the 5' incision. This Vibrio parahaemolyticus serotype O3:K6 (strain RIMD 2210633) protein is UvrABC system protein C.